The sequence spans 43 residues: Snaclec lebecetin subunit beta (43 aa).

Residues 1 to 43 (ALNCASGWSGGYDQHCYKVFDIPPSWAADEKFCKQQTSGGHLV) form the C-type lectin domain. A disulfide bridge connects residues cysteine 4 and cysteine 16.

In terms of assembly, heterodimer of subunits alpha and beta; disulfide-linked. The cofactor is Ca(2+). Post-translationally, glycosylated. Expressed by the venom gland.

The protein localises to the secreted. In terms of biological role, binds to the platelet GPIb/IX/V receptor system and inhibits ristocetin-induced platelet aggregation in human platelet-rich plasma. Strongly inhibits platelet aggregation induced by ADP, calcium ionophore, thrombin and collagen. Does not inhibit U46619-induced platelet aggregation. The polypeptide is Snaclec lebecetin subunit beta (Macrovipera lebetinus (Levantine viper)).